Reading from the N-terminus, the 485-residue chain is Glutamate--tRNA ligase (485 aa).

The short motif at 11–21 (PSPTGLLHIGN) is the 'HIGH' region element. A 'KMSKS' region motif is present at residues 255-259 (KLSKR). Lys258 is an ATP binding site.

This sequence belongs to the class-I aminoacyl-tRNA synthetase family. Glutamate--tRNA ligase type 1 subfamily. In terms of assembly, monomer.

The protein resides in the cytoplasm. It catalyses the reaction tRNA(Glu) + L-glutamate + ATP = L-glutamyl-tRNA(Glu) + AMP + diphosphate. Catalyzes the attachment of glutamate to tRNA(Glu) in a two-step reaction: glutamate is first activated by ATP to form Glu-AMP and then transferred to the acceptor end of tRNA(Glu). The polypeptide is Glutamate--tRNA ligase (Streptococcus gordonii (strain Challis / ATCC 35105 / BCRC 15272 / CH1 / DL1 / V288)).